The chain runs to 614 residues: Zinc metalloproteinase-disintegrin-like BmMP (614 aa).

The signal sequence occupies residues 1–20; sequence MIQALLVTICLAVFPYQGSS. Positions 21–188 are excised as a propeptide; sequence IILESGNVND…WESDEPIRNA (168 aa). Asn-187 is a glycosylation site (N-linked (GlcNAc...) asparagine). The region spanning 205–401 is the Peptidase M12B domain; that stretch reads KYIEFYVAVD…DRPQCILNKP (197 aa). Disulfide bonds link Cys-316/Cys-396, Cys-356/Cys-380, Cys-359/Cys-364, Cys-412/Cys-441, Cys-423/Cys-436, Cys-425/Cys-431, Cys-435/Cys-458, Cys-449/Cys-455, Cys-454/Cys-480, Cys-467/Cys-487, Cys-474/Cys-506, Cys-499/Cys-511, Cys-518/Cys-568, Cys-533/Cys-576, Cys-546/Cys-556, Cys-563/Cys-602, and Cys-596/Cys-607. His-341 provides a ligand contact to Zn(2+). Glu-342 is a catalytic residue. Zn(2+) contacts are provided by His-345 and His-351. Residues 409–495 enclose the Disintegrin domain; that stretch reads PAICGNYFVE…ECPTDIFRRN (87 aa). Residues 473–475 carry the D/ECD-tripeptide motif; that stretch reads DCD.

It belongs to the venom metalloproteinase (M12B) family. P-III subfamily. P-IIIa sub-subfamily. Monomer. Zn(2+) serves as cofactor. Expressed by the venom gland.

Its subcellular location is the secreted. Snake venom zinc metalloproteinase that inhibits platelet aggregation and degrades fibrinogen. This chain is Zinc metalloproteinase-disintegrin-like BmMP, found in Bungarus multicinctus (Many-banded krait).